We begin with the raw amino-acid sequence, 412 residues long: Homoserine dehydrogenase (412 aa).

Residues 9–16 (LGIGTVGG) and lysine 105 contribute to the NADP(+) site. Glutamate 190 is a substrate binding site. Catalysis depends on lysine 205, which acts as the Proton donor. The ACT domain maps to 330 to 407 (YLRLRAVDKP…ISGKVTRLRM (78 aa)).

Belongs to the homoserine dehydrogenase family.

The enzyme catalyses L-homoserine + NADP(+) = L-aspartate 4-semialdehyde + NADPH + H(+). It catalyses the reaction L-homoserine + NAD(+) = L-aspartate 4-semialdehyde + NADH + H(+). The protein operates within amino-acid biosynthesis; L-methionine biosynthesis via de novo pathway; L-homoserine from L-aspartate: step 3/3. Its pathway is amino-acid biosynthesis; L-threonine biosynthesis; L-threonine from L-aspartate: step 3/5. This chain is Homoserine dehydrogenase (hom), found in Methylobacillus glycogenes.